Reading from the N-terminus, the 380-residue chain is Pectinesterase QRT1 (380 aa).

The N-terminal stretch at 1 to 26 (MKVEAFIPAVLLLCFGVMLCLKSSCA) is a signal peptide. N-linked (GlcNAc...) asparagine glycans are attached at residues asparagine 74 and asparagine 137. Substrate contacts are provided by threonine 164 and glutamine 198. Aspartate 221 functions as the Proton donor in the catalytic mechanism. The N-linked (GlcNAc...) asparagine glycan is linked to asparagine 227. A disulfide bridge links cysteine 235 with cysteine 255. Residue aspartate 242 is the Nucleophile of the active site. Substrate-binding residues include arginine 298 and tryptophan 300. The N-linked (GlcNAc...) asparagine glycan is linked to asparagine 302.

The protein belongs to the pectinesterase family. As to expression, expressed in flower buds, siliques, developing guard cells, floral nectares, at the stigmatic surface, in the hypocotyl-root transition zone and the area of lateral root emergence. Not expressed in mature leaves.

The protein resides in the secreted. The protein localises to the cell wall. The catalysed reaction is [(1-&gt;4)-alpha-D-galacturonosyl methyl ester](n) + n H2O = [(1-&gt;4)-alpha-D-galacturonosyl](n) + n methanol + n H(+). It participates in glycan metabolism; pectin degradation; 2-dehydro-3-deoxy-D-gluconate from pectin: step 1/5. Its function is as follows. Pectinesterase required for cell type-specific pectin degradation to separate microspores. This is Pectinesterase QRT1 from Arabidopsis thaliana (Mouse-ear cress).